A 318-amino-acid polypeptide reads, in one-letter code: 2-keto-3-deoxygluconate permease (318 aa).

10 helical membrane-spanning segments follow: residues isoleucine 10–proline 30, glycine 42–isoleucine 62, valine 76–leucine 96, leucine 105–leucine 125, alanine 139–glycine 159, glycine 162–phenylalanine 182, valine 199–isoleucine 219, phenylalanine 224–alanine 244, alanine 263–valine 283, and alanine 289–tryptophan 309.

It belongs to the KdgT transporter family.

Its subcellular location is the cell inner membrane. It carries out the reaction 2-dehydro-3-deoxy-D-gluconate(in) + H(+)(in) = 2-dehydro-3-deoxy-D-gluconate(out) + H(+)(out). Catalyzes the proton-dependent uptake of 2-keto-3-deoxygluconate (KDG) into the cell. This is 2-keto-3-deoxygluconate permease from Pectobacterium carotovorum subsp. carotovorum (strain PC1).